The primary structure comprises 310 residues: Aspartate carbamoyltransferase catalytic subunit (310 aa).

The carbamoyl phosphate site is built by arginine 55 and threonine 56. Residue lysine 83 coordinates L-aspartate. Carbamoyl phosphate is bound by residues arginine 105, histidine 133, and glutamine 136. L-aspartate is bound by residues arginine 166 and arginine 220. The carbamoyl phosphate site is built by glycine 261 and proline 262.

This sequence belongs to the aspartate/ornithine carbamoyltransferase superfamily. ATCase family. As to quaternary structure, heterododecamer (2C3:3R2) of six catalytic PyrB chains organized as two trimers (C3), and six regulatory PyrI chains organized as three dimers (R2).

It catalyses the reaction carbamoyl phosphate + L-aspartate = N-carbamoyl-L-aspartate + phosphate + H(+). It participates in pyrimidine metabolism; UMP biosynthesis via de novo pathway; (S)-dihydroorotate from bicarbonate: step 2/3. Its function is as follows. Catalyzes the condensation of carbamoyl phosphate and aspartate to form carbamoyl aspartate and inorganic phosphate, the committed step in the de novo pyrimidine nucleotide biosynthesis pathway. This Chlorobium phaeovibrioides (strain DSM 265 / 1930) (Prosthecochloris vibrioformis (strain DSM 265)) protein is Aspartate carbamoyltransferase catalytic subunit.